Consider the following 228-residue polypeptide: Translin (228 aa).

The DNA/RNA binding stretch occupies residues 86–90; the sequence is RFHEH. The leucine-zipper stretch occupies residues 177-198; sequence LDSGFRLLNLKNDSLRKRYDGL. An N6-acetyllysine modification is found at Lys-187. Position 190 is a phosphoserine (Ser-190). An N6-acetyllysine modification is found at Lys-199.

This sequence belongs to the translin family. As to quaternary structure, ring-shaped heterooctamer of six TSN and two TSNAX subunits, DNA/RNA binding occurs inside the ring.

It is found in the cytoplasm. Its subcellular location is the nucleus. In terms of biological role, DNA-binding protein that specifically recognizes consensus sequences at the breakpoint junctions in chromosomal translocations, mostly involving immunoglobulin (Ig)/T-cell receptor gene segments. Seems to recognize single-stranded DNA ends generated by staggered breaks occurring at recombination hot spots. Exhibits both single-stranded and double-stranded endoribonuclease activity. May act as an activator of RNA-induced silencing complex (RISC) by facilitating endonucleolytic cleavage of the siRNA passenger strand. The protein is Translin of Homo sapiens (Human).